The chain runs to 21 residues: Sarafotoxin-D (21 aa).

Intrachain disulfides connect C1–C15 and C3–C11.

Belongs to the endothelin/sarafotoxin family. In terms of tissue distribution, expressed by the venom gland.

It localises to the secreted. Its function is as follows. Vasoconstrictor activity. These toxins cause cardiac arrest probably as a result of coronary vasospasm. May act by displaying agonistic activities towards endothelin-1 and -2 receptors (EDNRA and EDNRB). In Atractaspis engaddensis (Israeli burrowing asp), this protein is Sarafotoxin-D.